We begin with the raw amino-acid sequence, 92 residues long: Small ribosomal subunit protein bS16 (92 aa).

This sequence belongs to the bacterial ribosomal protein bS16 family.

This chain is Small ribosomal subunit protein bS16, found in Desulforudis audaxviator (strain MP104C).